The following is an 883-amino-acid chain: Aldehyde-alcohol dehydrogenase (883 aa).

The tract at residues 13–456 (KLVAEKHVDE…DNVSAINLLN (444 aa)) is aldehyde dehydrogenase. NAD(+) is bound by residues 121-126 (ITPTTN), glycine 206, and glycine 224. Residue cysteine 257 is the Nucleophile of the active site. NAD(+)-binding positions include glutamate 355, leucine 435, and 438 to 443 (GSYGRN). The interval 457-464 (IKKVGRRR) is linker. NAD(+)-binding positions include aspartate 500, aspartate 534, 561-565 (GSPMD), 612-613 (TT), valine 625, lysine 634, and leucine 653. 4 residues coordinate Fe cation: aspartate 668, histidine 672, histidine 736, and histidine 750.

This sequence in the N-terminal section; belongs to the aldehyde dehydrogenase family. The protein in the C-terminal section; belongs to the iron-containing alcohol dehydrogenase family. Fe(2+) is required as a cofactor.

The catalysed reaction is ethanol + NAD(+) = acetaldehyde + NADH + H(+). It carries out the reaction an aldehyde + NAD(+) + H2O = a carboxylate + NADH + 2 H(+). In terms of biological role, has alcohol dehydrogenase activity. Has aldehyde dehydrogenase activity. May play a role in enhancing virulence in mice. May be considered a potential virulence factor. This Streptococcus pneumoniae serotype 4 (strain ATCC BAA-334 / TIGR4) protein is Aldehyde-alcohol dehydrogenase.